The primary structure comprises 433 residues: N-lysine methyltransferase SMYD2 (433 aa).

One can recognise an SET domain in the interval glycine 7 to isoleucine 241. S-adenosyl-L-methionine is bound at residue lysine 17–arginine 19. Cysteine 52, cysteine 55, cysteine 65, cysteine 68, cysteine 74, cysteine 78, histidine 86, and cysteine 90 together coordinate Zn(2+). The MYND-type zinc finger occupies cysteine 52–cysteine 90. Residues histidine 137, asparagine 206 to histidine 207, and tyrosine 258 to phenylalanine 260 contribute to the S-adenosyl-L-methionine site. A Phosphoserine modification is found at serine 283.

It belongs to the class V-like SAM-binding methyltransferase superfamily. As to quaternary structure, interacts with RNA polymerase II and HELZ. Interacts with SIN3A and HDAC1. Interacts (via MYND-type zinc finger) with EPB41L3. Interacts (via SET domain) with p53/TP53. Interacts with RB1 and HSP90AA1.

The protein localises to the cytoplasm. Its subcellular location is the cytosol. It is found in the nucleus. The catalysed reaction is L-lysyl(4)-[histone H3] + 3 S-adenosyl-L-methionine = N(6),N(6),N(6)-trimethyl-L-lysyl(4)-[histone H3] + 3 S-adenosyl-L-homocysteine + 3 H(+). The enzyme catalyses L-lysyl-[protein] + S-adenosyl-L-methionine = N(6)-methyl-L-lysyl-[protein] + S-adenosyl-L-homocysteine + H(+). In terms of biological role, protein-lysine N-methyltransferase that methylates both histones and non-histone proteins, including p53/TP53 and RB1. Specifically trimethylates histone H3 'Lys-4' (H3K4me3) in vivo. The activity requires interaction with HSP90alpha. Shows even higher methyltransferase activity on p53/TP53. Monomethylates 'Lys-370' of p53/TP53, leading to decreased DNA-binding activity and subsequent transcriptional regulation activity of p53/TP53. Monomethylates RB1 at 'Lys-860'. This is N-lysine methyltransferase SMYD2 (SMYD2) from Homo sapiens (Human).